Consider the following 464-residue polypeptide: Cysteine--tRNA ligase (464 aa).

Position 30 (cysteine 30) interacts with Zn(2+). The 'HIGH' region motif lies at 32–42; sequence MTVYDYCHIGH. Zn(2+) is bound by residues cysteine 214, histidine 239, and glutamate 243. The 'KMSKS' region motif lies at 271-275; it reads KMSKS. Lysine 274 is an ATP binding site.

Belongs to the class-I aminoacyl-tRNA synthetase family. In terms of assembly, monomer. The cofactor is Zn(2+).

It localises to the cytoplasm. The enzyme catalyses tRNA(Cys) + L-cysteine + ATP = L-cysteinyl-tRNA(Cys) + AMP + diphosphate. The protein is Cysteine--tRNA ligase of Janthinobacterium sp. (strain Marseille) (Minibacterium massiliensis).